The chain runs to 198 residues: HTH-type transcriptional regulator BetI (198 aa).

Residues 8-68 (PIRRQQLIDA…ATMRYLISHL (61 aa)) enclose the HTH tetR-type domain. The H-T-H motif DNA-binding region spans 31 to 50 (TIAQIARRAGVSNGIISHYF).

It participates in amine and polyamine biosynthesis; betaine biosynthesis via choline pathway [regulation]. Its function is as follows. Repressor involved in the biosynthesis of the osmoprotectant glycine betaine. It represses transcription of the choline transporter BetT and the genes of BetAB involved in the synthesis of glycine betaine. In Serratia proteamaculans (strain 568), this protein is HTH-type transcriptional regulator BetI.